The following is an 871-amino-acid chain: Espin (871 aa).

ANK repeat units lie at residues 1 to 31 (MALE…GPSL), 35 to 66 (LDAL…AVSR), 69 to 99 (NGAT…RVQE), 103 to 132 (SGAT…ANSA), 137 to 167 (TGAL…GVNA), 171 to 201 (NGAT…DPHL), 205 to 235 (DGMT…SFSE), 239 to 268 (DGAT…EISQ), and 271 to 300 (WGGT…GLDV). A phosphoserine mark is found at S338 and S342. Disordered stretches follow at residues 349–400 (QLDS…RGIP), 416–469 (PEKS…VGLH), 493–750 (KVEL…APGV), and 819–850 (EREQ…TLGY). Positions 352-365 (SGMSSPNTTMSVQP) are enriched in polar residues. The segment covering 377 to 395 (FSNYDSCSSSHSSSKGQRS) has biased composition (low complexity). The segment covering 428–465 (PSPPPPPPPPPPSFPPPPPPTGTQPPPPPPGYPAPNPP) has biased composition (pro residues). S517, S524, and S556 each carry phosphoserine. Residues 522-548 (QDSELLHRQELLRHSTGLRRQDSDRKQ) are compositionally biased toward basic and acidic residues. The segment covering 606 to 629 (LPPPPPPPPLPEALSSPPPAPPLP) has biased composition (pro residues). Polar residues-rich tracts occupy residues 659 to 670 (KSFNMMSPTGDN) and 685 to 707 (PTPQ…SQPE). Residue S665 is modified to Phosphoserine. The region spanning 669-686 (DNSELLAEIKAGKSLKPT) is the WH2 domain. Phosphoserine is present on residues S704, S708, and S714. A coiled-coil region spans residues 772-848 (KRQVMVRKLQ…KEQSEKLRTL (77 aa)).

Monomer. Binds F-actin in a Ca(2+)-resistant fashion. Interacts (via N-terminus) with BAIAP2 (via SH3-domain). Interacts with PFN2. Interacts with MYO3A (via C-terminus). Interacts with MYO3B (via C-terminus). In terms of tissue distribution, expressed at high concentration in the microvillar parallel actin bundle (PAB) of hair cells stereocilia in the cochlea and vestibular system. Detected also at high levels of a number of other sensory cell types, including taste receptor cells, solitary chemoreceptor cells, vomeronasal sensory neurons and Merkel cells. Isoforms 2, 3, 4 and 5 are expressed in Purkinje cells dendritic spines. Expressed in utricle hair bundles (at protein level).

It localises to the cytoplasm. Its subcellular location is the cytoskeleton. It is found in the cell projection. The protein localises to the stereocilium. The protein resides in the microvillus. It localises to the cell junction. Its subcellular location is the dendritic spine. Functionally, multifunctional actin-bundling protein. Plays a major role in regulating the organization, dimension, dynamics and signaling capacities of the actin filament-rich microvilli in the mechanosensory and chemosensory cells. Required for the assembly and stabilization of the stereociliary parallel actin bundles. Plays a crucial role in the formation and maintenance of inner ear hair cell stereocilia. Involved in the elongation of actin in stereocilia. In extrastriolar hair cells, required for targeting MYO3B to stereocilia tips, and for regulation of stereocilia diameter and staircase formation. This Mus musculus (Mouse) protein is Espin (Espn).